Here is a 435-residue protein sequence, read N- to C-terminus: Serine--tRNA ligase (435 aa).

L-serine is bound at residue 238–240 (TAE). 269 to 271 (RKE) contacts ATP. Residue Glu292 participates in L-serine binding. 356 to 359 (EISS) is an ATP binding site. Residue Ser391 participates in L-serine binding.

This sequence belongs to the class-II aminoacyl-tRNA synthetase family. Type-1 seryl-tRNA synthetase subfamily. As to quaternary structure, homodimer. The tRNA molecule binds across the dimer.

The protein resides in the cytoplasm. The enzyme catalyses tRNA(Ser) + L-serine + ATP = L-seryl-tRNA(Ser) + AMP + diphosphate + H(+). It catalyses the reaction tRNA(Sec) + L-serine + ATP = L-seryl-tRNA(Sec) + AMP + diphosphate + H(+). It participates in aminoacyl-tRNA biosynthesis; selenocysteinyl-tRNA(Sec) biosynthesis; L-seryl-tRNA(Sec) from L-serine and tRNA(Sec): step 1/1. Functionally, catalyzes the attachment of serine to tRNA(Ser). Is also able to aminoacylate tRNA(Sec) with serine, to form the misacylated tRNA L-seryl-tRNA(Sec), which will be further converted into selenocysteinyl-tRNA(Sec). This is Serine--tRNA ligase from Leuconostoc mesenteroides subsp. mesenteroides (strain ATCC 8293 / DSM 20343 / BCRC 11652 / CCM 1803 / JCM 6124 / NCDO 523 / NBRC 100496 / NCIMB 8023 / NCTC 12954 / NRRL B-1118 / 37Y).